A 294-amino-acid chain; its full sequence is Protein C3orf33 (294 aa).

Residue alanine 2 is modified to N-acetylalanine. A helical membrane pass occupies residues isoleucine 40–isoleucine 56.

In terms of tissue distribution, highly expressed in ileocecal tissue and endometrium.

The protein localises to the membrane. It is found in the secreted. Secreted protein may play a role in transcription regulation via the MAPK3/MAPK1 pathway through an unidentified receptor on the plasma membrane. In Homo sapiens (Human), this protein is Protein C3orf33 (C3orf33).